An 81-amino-acid polypeptide reads, in one-letter code: Control protein C.BamHI (81 aa).

The HTH cro/C1-type domain maps to 13–68; it reads VRQIRLSKSNMSQEKLAFECDLHRTYISDIERGTRNVSLDNIEKISKALGVQPKDL. Positions 25–44 form a DNA-binding region, H-T-H motif; it reads QEKLAFECDLHRTYISDIER.

May help modulate methylase (M) and restriction enzyme (R) expression as cells undergo physiological changes such as sporulation or transformation. The polypeptide is Control protein C.BamHI (Bacillus amyloliquefaciens (Bacillus velezensis)).